The sequence spans 1342 residues: MVYSYTEKKRIRKDFGKRPQVLDVSYLLSIQLDSFQKFIERDPEGQYGLEAAFRSVFPIQSYSGNSELQYVSYRLGEPVFDVKECQIRGVTFSAPLRVKLRLIIYEREAPEGTVKDIKEQEVYMGEIPLMTDNGTFVINGTERVIVSQLHRSPGVFFDSDKGKTHSSGKVLYNARIIPYRGSWLDFEFDPKDNLFVRIDRRRKLPATIILRALNYSTGQILDTFFDKVVYEIHDKKLQMELLPERLRGETASFDIEANGTVYVEKGRRITARHIRQLEKDGVAQIEVPVEYIIGKAVVKDYIDENTGEIIVPANMELTLDLLAKLSQAGHKRIETLFTNDLDHGAYISETLRVDPTSDRLSALVEIYRMMRPGEPPTREAAENLFENLFFSEDRYDLSAVGRMKFNRSLLREEIEGSGILSKDDIIEVMKKLIDIRNGKGEVDDIDHLGNRRIRSVGEMAENQFRVGLVRVERAVKERLSLGDLDTLMPQDMINAKPISAAVKEFFGSSQLSQFMDQNNPLSEITHKRRISALGPGGLTRERAGFEVRDVHPTHYGRVCPIETPEGPNIGLINSLSVYAQTNEYGFLETPYRRVQDGVVTDEIHYLSAIEEGNFVIAQANTNLGDDGSFVDDLVTCRSKGESSLFSRDQVDYMDVSTQQVVSVGASLIPFLEHDDANRALMGANMQRQAVPTLCTDKPLVGTGMERAVAVDSGVTAVAKRGGTVQYVDASRIVINVNPDEMYPGEAGIDIYNLTKYIRSNQNTCISQTPCVSLGEPVERGDVLADGPSTDLGELALGQNMRIAFMPWNGYNFEDSMLVSERVVQEDRFTTIHIQELACVSRDTKLGPEEITADIPNVGEAALSKLDESGIVYIGAEVTGGDILVGKVTPKGETQLTPEEKLLRAIFGEKASDVKDSSLRVPNGVSGTVIDVQVFTRDGVEKDKRALEIEEMQLKQAKKDLTEELQIFEAGLFARIRDVLISGGIEAEKLDKLTRERWLELGLADEEKQNQLEQLAEQYDELKHEFEKKLEAKRRKITQGDDLAPGVLKIVKVYLAVKRQIQPGDKMAGRHGNKGVISKINPIEDMPYDENGVPVDIVLNPLGVPSRMNIGQILETHLGMAAKGIGDKINAMLKQHEEVAKLREFIQKAYNLGDDVRQKVDLNTFSDEEVLRLAENLKKGMPIATPVFDGAKEKEIKELLQLGGLPTSGQITLFDGRTGEQFERQVTVGYMYMLKLNHLVDDKMHARSTGSYSLVTQQPLGGKAQFGGQRFGEMEVWALEAYGAAYTLQEMLTVKSDDVNGRTKMYKNIVDGNHMMEPGMPESFNVLLKEIRSLGINIELEED.

It belongs to the RNA polymerase beta chain family. The RNAP catalytic core consists of 2 alpha, 1 beta, 1 beta' and 1 omega subunit. When a sigma factor is associated with the core the holoenzyme is formed, which can initiate transcription.

The catalysed reaction is RNA(n) + a ribonucleoside 5'-triphosphate = RNA(n+1) + diphosphate. In terms of biological role, DNA-dependent RNA polymerase catalyzes the transcription of DNA into RNA using the four ribonucleoside triphosphates as substrates. The protein is DNA-directed RNA polymerase subunit beta of Sodalis glossinidius (strain morsitans).